The following is a 242-amino-acid chain: Ribonuclease 3 (242 aa).

An RNase III domain is found at 10 to 146 (LQNFNKKFAD…FVGALYLDQG (137 aa)). Glu-59 contacts Mg(2+). The active site involves Asp-63. Mg(2+) contacts are provided by Asp-132 and Glu-135. Glu-135 is an active-site residue. Residues 172-241 (DFKTQFQELI…AEKAYNDMKK (70 aa)) form the DRBM domain. The interval 216 to 242 (VAKGQGRTKKESEQKAAEKAYNDMKKK) is disordered. Residues 223–242 (TKKESEQKAAEKAYNDMKKK) show a composition bias toward basic and acidic residues.

It belongs to the ribonuclease III family. In terms of assembly, homodimer. It depends on Mg(2+) as a cofactor.

Its subcellular location is the cytoplasm. The enzyme catalyses Endonucleolytic cleavage to 5'-phosphomonoester.. Functionally, digests double-stranded RNA. Involved in the processing of primary rRNA transcript to yield the immediate precursors to the large and small rRNAs (23S and 16S). Processes some mRNAs, and tRNAs when they are encoded in the rRNA operon. Processes pre-crRNA and tracrRNA of type II CRISPR loci if present in the organism. In Staphylococcus carnosus (strain TM300), this protein is Ribonuclease 3.